Here is a 180-residue protein sequence, read N- to C-terminus: ATP synthase subunit delta (180 aa).

Belongs to the ATPase delta chain family. As to quaternary structure, F-type ATPases have 2 components, F(1) - the catalytic core - and F(0) - the membrane proton channel. F(1) has five subunits: alpha(3), beta(3), gamma(1), delta(1), epsilon(1). F(0) has three main subunits: a(1), b(2) and c(10-14). The alpha and beta chains form an alternating ring which encloses part of the gamma chain. F(1) is attached to F(0) by a central stalk formed by the gamma and epsilon chains, while a peripheral stalk is formed by the delta and b chains.

The protein localises to the cell inner membrane. In terms of biological role, f(1)F(0) ATP synthase produces ATP from ADP in the presence of a proton or sodium gradient. F-type ATPases consist of two structural domains, F(1) containing the extramembraneous catalytic core and F(0) containing the membrane proton channel, linked together by a central stalk and a peripheral stalk. During catalysis, ATP synthesis in the catalytic domain of F(1) is coupled via a rotary mechanism of the central stalk subunits to proton translocation. Its function is as follows. This protein is part of the stalk that links CF(0) to CF(1). It either transmits conformational changes from CF(0) to CF(1) or is implicated in proton conduction. This Geobacter metallireducens (strain ATCC 53774 / DSM 7210 / GS-15) protein is ATP synthase subunit delta.